The primary structure comprises 336 residues: Ketol-acid reductoisomerase (NADP(+)) (336 aa).

A KARI N-terminal Rossmann domain is found at 1-182 (MAVIYYDKDA…GVTRAGVIET (182 aa)). NADP(+)-binding positions include 25–28 (FGSQ), Arg-48, Ser-51, Ser-53, and 83–86 (DEHQ). His-108 is a catalytic residue. Gly-134 serves as a coordination point for NADP(+). The KARI C-terminal knotted domain occupies 183-328 (TFKEETETDL…KELRKMMPWL (146 aa)). Asp-191, Glu-195, Glu-227, and Glu-231 together coordinate Mg(2+). Ser-252 lines the substrate pocket.

This sequence belongs to the ketol-acid reductoisomerase family. It depends on Mg(2+) as a cofactor.

The enzyme catalyses (2R)-2,3-dihydroxy-3-methylbutanoate + NADP(+) = (2S)-2-acetolactate + NADPH + H(+). It catalyses the reaction (2R,3R)-2,3-dihydroxy-3-methylpentanoate + NADP(+) = (S)-2-ethyl-2-hydroxy-3-oxobutanoate + NADPH + H(+). It participates in amino-acid biosynthesis; L-isoleucine biosynthesis; L-isoleucine from 2-oxobutanoate: step 2/4. It functions in the pathway amino-acid biosynthesis; L-valine biosynthesis; L-valine from pyruvate: step 2/4. In terms of biological role, involved in the biosynthesis of branched-chain amino acids (BCAA). Catalyzes an alkyl-migration followed by a ketol-acid reduction of (S)-2-acetolactate (S2AL) to yield (R)-2,3-dihydroxy-isovalerate. In the isomerase reaction, S2AL is rearranged via a Mg-dependent methyl migration to produce 3-hydroxy-3-methyl-2-ketobutyrate (HMKB). In the reductase reaction, this 2-ketoacid undergoes a metal-dependent reduction by NADPH to yield (R)-2,3-dihydroxy-isovalerate. This Thermotoga neapolitana (strain ATCC 49049 / DSM 4359 / NBRC 107923 / NS-E) protein is Ketol-acid reductoisomerase (NADP(+)).